The primary structure comprises 103 residues: Protein IQ-DOMAIN 20 (103 aa).

The tract at residues 10-22 is calmodulin-binding; it reads VVRRKLLRRSQSR. IQ domains follow at residues 36–62 and 63–87; these read EEIAAVKIQAFFRGHLARRAFKALKSL and VKLQAVARGVLVRRQARIALHCMHA.

This sequence belongs to the IQD family. In terms of assembly, interacts with calmodulin (CaM and CML) at the plasma membrane in a calcium ion Ca(2+)- independent manner, however, Ca(2+) seems to modulate calmodulin binding. Binds to multiple calmodulin (CaM) in the presence of Ca(2+) and CaM-like proteins.

It localises to the nucleus. It is found in the nucleolus. The protein resides in the cell membrane. Its function is as follows. May be involved in cooperative interactions with calmodulins or calmodulin-like proteins. Recruits calmodulin proteins to microtubules, thus being a potential scaffold in cellular signaling and trafficking. May associate with nucleic acids and regulate gene expression at the transcriptional or post-transcriptional level. The polypeptide is Protein IQ-DOMAIN 20 (Arabidopsis thaliana (Mouse-ear cress)).